The primary structure comprises 383 residues: MAEEEMRKHLVLAKPFSLEDEKDSEHTASNVIRKILSLFKTVRPGSDLTNFQLPPQLNLPRSQLQCYGEMVYSFVGQDLLGECSRRDLPIERLKSVVTWNISTLRPVVFGMSPYNSVLGETHHVSNGHINVIAEQVVHHPPVSALHATHEQENIDVTWCQYFTPKFRGTHVDVEVKGKRVMKLLNHIETYEMDQPRLIMRFLPAPGAYWAGKVKIKCPETDLEAELHLISDSFIERFRGNNNRSIKGKIFESSSGNQLYNIFGHWDRTVMAKNIKTGELEVIYNAKENITGLKPPTVKNLEEVTESESTMVWSEVSEGILKKDWERAREAKIVVEEKQRASLKQREASGESWVPKHFLVVKDGKDWDCSPLQPTVPPAPLVIT.

It belongs to the OSBP family. Expressed in stems and flowers.

Its function is as follows. May be involved in the transport of sterols. In Arabidopsis thaliana (Mouse-ear cress), this protein is Oxysterol-binding protein-related protein 4B (ORP4B).